Consider the following 472-residue polypeptide: Methanethiol oxidase (472 aa).

It belongs to the selenium-binding protein family.

The protein resides in the nucleus. The protein localises to the cytoplasm. Its subcellular location is the cytosol. It localises to the membrane. It catalyses the reaction methanethiol + O2 + H2O = hydrogen sulfide + formaldehyde + H2O2 + H(+). It participates in organosulfur degradation. In terms of biological role, catalyzes the oxidation of methanethiol, an organosulfur compound known to be produced in substantial amounts by gut bacteria. Selenium-binding protein which may be involved in the sensing of reactive xenobiotics in the cytoplasm. May be involved in intra-Golgi protein transport. In Xenopus tropicalis (Western clawed frog), this protein is Methanethiol oxidase (selenbp1).